The chain runs to 368 residues: 2-aminoethylphosphonate--pyruvate transaminase (368 aa).

N6-(pyridoxal phosphate)lysine is present on Lys-192.

Belongs to the class-V pyridoxal-phosphate-dependent aminotransferase family. PhnW subfamily. In terms of assembly, homodimer. Requires pyridoxal 5'-phosphate as cofactor.

The catalysed reaction is (2-aminoethyl)phosphonate + pyruvate = phosphonoacetaldehyde + L-alanine. In terms of biological role, involved in phosphonate degradation. This Pseudomonas putida (strain ATCC 47054 / DSM 6125 / CFBP 8728 / NCIMB 11950 / KT2440) protein is 2-aminoethylphosphonate--pyruvate transaminase.